Consider the following 362-residue polypeptide: Sphingosine 1-phosphate receptor 1 (362 aa).

Residues 1–25 (MDDLIARHYNFTGKFRKVHKDPGLK) lie on the Extracellular side of the membrane. Asparagine 10 is a glycosylation site (N-linked (GlcNAc...) asparagine). Residues 26-47 (ADSVVFIIVCCFIILENVLVLL) form a helical membrane-spanning segment. Over 48–61 (TIWRTKKFHKPMYY) the chain is Cytoplasmic. A helical transmembrane segment spans residues 62-83 (FIGNLALSDLLAGVVYTANILL). At 84–95 (SGANTYKLTPTQ) the chain is on the extracellular side. The chain crosses the membrane as a helical span at residues 96–117 (WFFREGSMFVALAASVFSLLAI). Residue 99–100 (RE) coordinates sphing-4-enine 1-phosphate. Topologically, residues 118 to 139 (AIERHLTMLKMKLHNNGKTCRV) are cytoplasmic. A helical membrane pass occupies residues 140–161 (FMLISTVWFIAAILGGLPVMGW). Residues 162 to 175 (NCIDSMNNCSTVLP) are Extracellular-facing. Residues cysteine 163 and cysteine 170 are joined by a disulfide bond. N-linked (GlcNAc...) asparagine glycosylation is present at asparagine 169. The helical transmembrane segment at 176 to 203 (LYHKAYILFCTTVFSVILMAIVILYARI) threads the bilayer. Over 204–238 (YALVRTRSRKLVFRKVANGRGSNKSSEKSMALLKT) the chain is Cytoplasmic. The chain crosses the membrane as a helical span at residues 239–259 (VIIVLSCFIACWAPLFILLLL). Residue 246–250 (FIACW) coordinates sphing-4-enine 1-phosphate. Residues 260–270 (DVACQTLTCSI) are Extracellular-facing. A disulfide bridge links cysteine 263 with cysteine 268. The chain crosses the membrane as a helical span at residues 271–291 (LYKAEWFLALAVLNSAMNPLI). Residues 292–362 (YTLTSNEMRR…VSSGNITSSS (71 aa)) lie on the Cytoplasmic side of the membrane. The S-palmitoyl cysteine moiety is linked to residue cysteine 309. The segment at 328 to 362 (FSRSKSDNSSHPNKDEPEYSPRETIVSSGNITSSS) is disordered. Residues 329-348 (SRSKSDNSSHPNKDEPEYSP) show a composition bias toward basic and acidic residues. The segment covering 352–362 (IVSSGNITSSS) has biased composition (polar residues).

The protein belongs to the G-protein coupled receptor 1 family.

Its subcellular location is the cell membrane. G-protein coupled receptor for the bioactive lysosphingolipid sphingosine 1-phosphate (S1P) that seems to be coupled to the G(i) subclass of heteromeric G proteins. Signaling leads to the activation of RAC1, SRC, PTK2/FAK1 and MAP kinases. Plays an important role in cell migration, probably via its role in the reorganization of the actin cytoskeleton and the formation of lamellipodia in response to stimuli that increase the activity of the sphingosine kinase SPHK1. Required for normal chemotaxis toward sphingosine 1-phosphate. This Danio rerio (Zebrafish) protein is Sphingosine 1-phosphate receptor 1 (s1pr1).